The following is a 286-amino-acid chain: MIYTCLSPAKINLFLYVTGRRKDGYHNIQTLFQFLDYGDQFKIIANKTGNIELFTEKKIFMNVQNSIIIAAKLLKKTALLQGKLQNSSYGAKIFLKKNIPMGSGLGGGSSNAATTLVVLNKLWNTQYTLKELSLLGLRIGADVPGFVMGNTAVIEGIGDILYPIVQKEKWYLVVYPCINISTRYMFSSPFLMSNTAKKSLQVLLKTPFKNDFENIAKKQFVPIKKLIRMLSSYAPSRMTGTGSCVFSEFDNKKSAQKIFSVLPKNVQGFIAKSVNISPLHKTLYKR.

Residue lysine 10 is part of the active site. ATP is bound at residue 100 to 110; it reads PMGSGLGGGSS. Residue aspartate 142 is part of the active site.

The protein belongs to the GHMP kinase family. IspE subfamily. In terms of assembly, homodimer.

It carries out the reaction 4-CDP-2-C-methyl-D-erythritol + ATP = 4-CDP-2-C-methyl-D-erythritol 2-phosphate + ADP + H(+). It functions in the pathway isoprenoid biosynthesis; isopentenyl diphosphate biosynthesis via DXP pathway; isopentenyl diphosphate from 1-deoxy-D-xylulose 5-phosphate: step 3/6. Its function is as follows. Catalyzes the phosphorylation of the position 2 hydroxy group of 4-diphosphocytidyl-2C-methyl-D-erythritol. The protein is 4-diphosphocytidyl-2-C-methyl-D-erythritol kinase of Buchnera aphidicola subsp. Acyrthosiphon pisum (strain APS) (Acyrthosiphon pisum symbiotic bacterium).